We begin with the raw amino-acid sequence, 486 residues long: MKITDLAGSNFPELSAQLKGDAATIEIGGITADSRQVKPGDLFVAVAGSKADGAAYIADALSRGASAVVAGTGTPAEAGAPVFAISDPRRFLAKAASSFYGRQPETMVAVTGTAGKTSVASFTRQIWAHSGFSAAMIGTTGVVAPGRTEYGSLTTPDPVSLHKLLAELADEGVTHAAMEASSHGLDQRRLDGVELAAAAFTNLGRDHMDYHPTVEHYMASKMRLFGALLPKGSPAVIFADDQWSAEAIAAARKAGHDVRTVGRNGDFIALKRVEHFRHKQSAEVHVGDDIYEIHVPLAGDFQIANALVAAGLAMSTGITAKAAFSALERLQGASGRLELVGQTKDGALAYVDYAHKPDALANVLESVRPFTTGRVVVVFGCGGDRDKGKRPIMGEIASRLADVVIVTDDNPRSEVPEVIRAEIMAAAKGATEIGDRAEAIRAAVGMLKTGDTLIVAGKGHEEGQTVGSVTLPFSDHAEVRKALGGL.

Ser34 is a UDP-N-acetyl-alpha-D-muramoyl-L-alanyl-D-glutamate binding site. 112–118 (GTAGKTS) contacts ATP. UDP-N-acetyl-alpha-D-muramoyl-L-alanyl-D-glutamate-binding positions include 154–155 (TT), Ser181, Gln187, and Arg189. The residue at position 221 (Lys221) is an N6-carboxylysine. Residues Arg385, 409-412 (DNPR), Gly457, and Glu461 contribute to the meso-2,6-diaminopimelate site. Residues 409–412 (DNPR) carry the Meso-diaminopimelate recognition motif motif.

Belongs to the MurCDEF family. MurE subfamily. It depends on Mg(2+) as a cofactor. In terms of processing, carboxylation is probably crucial for Mg(2+) binding and, consequently, for the gamma-phosphate positioning of ATP.

The protein resides in the cytoplasm. It catalyses the reaction UDP-N-acetyl-alpha-D-muramoyl-L-alanyl-D-glutamate + meso-2,6-diaminopimelate + ATP = UDP-N-acetyl-alpha-D-muramoyl-L-alanyl-gamma-D-glutamyl-meso-2,6-diaminopimelate + ADP + phosphate + H(+). It participates in cell wall biogenesis; peptidoglycan biosynthesis. Functionally, catalyzes the addition of meso-diaminopimelic acid to the nucleotide precursor UDP-N-acetylmuramoyl-L-alanyl-D-glutamate (UMAG) in the biosynthesis of bacterial cell-wall peptidoglycan. This is UDP-N-acetylmuramoyl-L-alanyl-D-glutamate--2,6-diaminopimelate ligase from Rhizobium meliloti (strain 1021) (Ensifer meliloti).